The primary structure comprises 513 residues: ATP synthase subunit alpha (513 aa).

Residue 169 to 176 (GDRQTGKT) participates in ATP binding.

This sequence belongs to the ATPase alpha/beta chains family. As to quaternary structure, F-type ATPases have 2 components, CF(1) - the catalytic core - and CF(0) - the membrane proton channel. CF(1) has five subunits: alpha(3), beta(3), gamma(1), delta(1), epsilon(1). CF(0) has three main subunits: a(1), b(2) and c(9-12). The alpha and beta chains form an alternating ring which encloses part of the gamma chain. CF(1) is attached to CF(0) by a central stalk formed by the gamma and epsilon chains, while a peripheral stalk is formed by the delta and b chains.

The protein localises to the cell inner membrane. It carries out the reaction ATP + H2O + 4 H(+)(in) = ADP + phosphate + 5 H(+)(out). Produces ATP from ADP in the presence of a proton gradient across the membrane. The alpha chain is a regulatory subunit. This Histophilus somni (strain 2336) (Haemophilus somnus) protein is ATP synthase subunit alpha.